The primary structure comprises 222 residues: Endonuclease V (222 aa).

Mg(2+)-binding residues include D43 and D109.

It belongs to the endonuclease V family. Mg(2+) is required as a cofactor.

It localises to the cytoplasm. The catalysed reaction is Endonucleolytic cleavage at apurinic or apyrimidinic sites to products with a 5'-phosphate.. Functionally, DNA repair enzyme involved in the repair of deaminated bases. Selectively cleaves double-stranded DNA at the second phosphodiester bond 3' to a deoxyinosine leaving behind the intact lesion on the nicked DNA. The chain is Endonuclease V from Roseiflexus castenholzii (strain DSM 13941 / HLO8).